Here is a 134-residue protein sequence, read N- to C-terminus: 6,7-dimethyl-8-ribityllumazine synthase (134 aa).

5-amino-6-(D-ribitylamino)uracil is bound by residues Phe-12, 44 to 46, and 68 to 70; these read VFD and SVI. 73–74 is a (2S)-2-hydroxy-3-oxobutyl phosphate binding site; it reads DT. His-76 acts as the Proton donor in catalysis. Leu-101 is a 5-amino-6-(D-ribitylamino)uracil binding site. Residue Arg-116 participates in (2S)-2-hydroxy-3-oxobutyl phosphate binding.

The protein belongs to the DMRL synthase family.

It carries out the reaction (2S)-2-hydroxy-3-oxobutyl phosphate + 5-amino-6-(D-ribitylamino)uracil = 6,7-dimethyl-8-(1-D-ribityl)lumazine + phosphate + 2 H2O + H(+). It participates in cofactor biosynthesis; riboflavin biosynthesis; riboflavin from 2-hydroxy-3-oxobutyl phosphate and 5-amino-6-(D-ribitylamino)uracil: step 1/2. Its function is as follows. Catalyzes the formation of 6,7-dimethyl-8-ribityllumazine by condensation of 5-amino-6-(D-ribitylamino)uracil with 3,4-dihydroxy-2-butanone 4-phosphate. This is the penultimate step in the biosynthesis of riboflavin. This Methanosarcina barkeri (strain Fusaro / DSM 804) protein is 6,7-dimethyl-8-ribityllumazine synthase.